The chain runs to 451 residues: Tapasin-related protein (451 aa).

The first 20 residues, 1–20, serve as a signal peptide directing secretion; sequence MGLEPSWYLLLCLAVSGAAG. Over 21–412 the chain is Lumenal; that stretch reads TDPPTAPTTA…RVLPNPEQRG (392 aa). One can recognise an Ig-like V-type domain in the interval 196–301; sequence FQVTSETQTL…TSLYQAQQIM (106 aa). 2 cysteine pairs are disulfide-bonded: C217/C288 and C326/C387. Residues N270 and N277 are each glycosylated (N-linked (GlcNAc...) asparagine). Residues 302–399 enclose the Ig-like C1-type domain; it reads PLNILAPPKI…AHVSLEEPLT (98 aa). The helical transmembrane segment at 413 to 433 threads the bilayer; it reads TLGVIFASIIFLSALLLFLGL. At 434–451 the chain is on the cytoplasmic side; that stretch reads HRQQASSSRSTRPMRHSG.

In terms of assembly, interacts with peptide-free HLA-A*02-B2M complexes or those loaded with low affinity peptides, likely facilitating peptide exchange onto higher affinity peptides. Interacts with MR1 in a ligand-independent way; this interaction may stabilize MR1 pool and facilitate ligand loading and dissociation. In terms of tissue distribution, widely expressed.

The protein resides in the cell membrane. It localises to the endoplasmic reticulum membrane. It is found in the microsome membrane. The protein localises to the golgi apparatus membrane. In terms of biological role, component of the antigen processing and presentation pathway, which binds to MHC class I coupled with beta2-microglobulin/B2M. Association between TAPBPR and MHC class I occurs in the absence of a functional peptide-loading complex (PLC). Expression seems to slow down and down-regulate MHC class I surface expression. In Mus musculus (Mouse), this protein is Tapasin-related protein (Tapbpl).